Consider the following 176-residue polypeptide: Siroheme decarboxylase alpha subunit (176 aa).

The disordered stretch occupies residues 1-24; the sequence is MTEAHNACCHPSGTAAGHHGAGKA. Over residues 12 to 24 the composition is skewed to low complexity; that stretch reads SGTAAGHHGAGKA.

This sequence belongs to the Ahb/Nir family. In terms of assembly, forms a heterodimer composed of AhbA and AhbB. Also forms heterotetramers.

The catalysed reaction is siroheme + 2 H(+) = 12,18-didecarboxysiroheme + 2 CO2. The protein operates within porphyrin-containing compound metabolism; protoheme biosynthesis. Involved in siroheme-dependent heme b biosynthesis. Catalyzes the decarboxylation of siroheme into didecarboxysiroheme. The sequence is that of Siroheme decarboxylase alpha subunit from Nitratidesulfovibrio vulgaris (strain ATCC 29579 / DSM 644 / CCUG 34227 / NCIMB 8303 / VKM B-1760 / Hildenborough) (Desulfovibrio vulgaris).